Reading from the N-terminus, the 433-residue chain is Metacaspase-1 (433 aa).

Positions 1–123 are disordered; the sequence is MYPGRAKPTY…PPSQVQHTGP (123 aa). The segment covering 9 to 44 has biased composition (low complexity); that stretch reads TYNNQQAQQAQSQVGYQTGYSNAQPQQQYYTAPQQQ. Polar residues-rich tracts occupy residues 45–55 and 83–109; these read NVSGSSMSFQH and QQNYRNDIQQNHASGTVNGPSGYQQPQ. Catalysis depends on residues H222 and C278.

This sequence belongs to the peptidase C14B family.

Involved in cell death (apoptosis). The polypeptide is Metacaspase-1 (MCA1) (Kluyveromyces lactis (strain ATCC 8585 / CBS 2359 / DSM 70799 / NBRC 1267 / NRRL Y-1140 / WM37) (Yeast)).